Here is a 46-residue protein sequence, read N- to C-terminus: Large ribosomal subunit protein bL33A (46 aa).

Belongs to the bacterial ribosomal protein bL33 family.

In Mesomycoplasma hyopneumoniae (strain 7448) (Mycoplasma hyopneumoniae), this protein is Large ribosomal subunit protein bL33A.